Reading from the N-terminus, the 294-residue chain is Nucleotide-binding protein Smal_0950 (294 aa).

16-23 (GLSGSGKS) contributes to the ATP binding site. 69 to 72 (DVRG) lines the GTP pocket.

It belongs to the RapZ-like family.

Displays ATPase and GTPase activities. The sequence is that of Nucleotide-binding protein Smal_0950 from Stenotrophomonas maltophilia (strain R551-3).